We begin with the raw amino-acid sequence, 358 residues long: HTH-type transcriptional regulator IpsA (358 aa).

Residues 8-63 (GTLASIAAKLGISRTTVSNAYNRPEQLSAELRQRILDTAEDMGYLGPDPVARSLRT) enclose the HTH lacI-type domain. Residues 10–29 (LASIAAKLGISRTTVSNAYN) constitute a DNA-binding region (H-T-H motif).

As to quaternary structure, homodimer.

Myo-inositol causes the dissociation of the IpsA-DNA complex in vitro. Plays a role in the regulation of cell wall biogenesis. Inositol-dependent transcriptional activator of ino1, which encodes inositol phosphate synthase. Also regulates other target genes, which are most likely involved in the synthesis of inositol-derived cell wall components and mycothiol. Acts by binding to a conserved palindromic motif within the promoter regions. In Corynebacterium glutamicum (strain ATCC 13032 / DSM 20300 / JCM 1318 / BCRC 11384 / CCUG 27702 / LMG 3730 / NBRC 12168 / NCIMB 10025 / NRRL B-2784 / 534), this protein is HTH-type transcriptional regulator IpsA.